Reading from the N-terminus, the 382-residue chain is ADP,ATP carrier protein, mitochondrial (382 aa).

Residues 1–71 (MAEQANQPTV…PMMSSSPIFA (71 aa)) constitute a mitochondrion transit peptide. 3 Solcar repeats span residues 80–173 (KNFM…FKRL), 185–277 (KWFG…LKPV), and 285–371 (DNFF…LQIL). 5 helical membrane-spanning segments follow: residues 82 to 109 (FMIDFLMGGVSAAVSKTAAAPIERVKLL), 150 to 174 (TANVIRYFPTQALNFAFKDYFKRLF), 183 to 203 (YWKWFGGNLASGGAAGASSLF), 253 to 274 (FNISCVGIIVYRGLYFGMYDSL), and 288 to 308 (FASFALGWLITNGAGLASYPI). ADP contacts are provided by R155 and K167. R312 provides a ligand contact to ADP. An important for transport activity region spans residues 312 to 317 (RRRMMM). A Nucleotide carrier signature motif motif is present at residues 312 to 317 (RRRMMM). The helical transmembrane segment at 348 to 368 (AGANILRAIAGAGVLSGYDQL) threads the bilayer.

Belongs to the mitochondrial carrier (TC 2.A.29) family. As to quaternary structure, monomer.

The protein localises to the mitochondrion inner membrane. It catalyses the reaction ADP(in) + ATP(out) = ADP(out) + ATP(in). Its activity is regulated as follows. The matrix-open state (m-state) is inhibited by the membrane-permeable bongkrekic acid (BKA). The cytoplasmic-open state (c-state) is inhibited by the membrane-impermeable toxic inhibitor carboxyatractyloside (CATR). ADP:ATP antiporter that mediates import of ADP into the mitochondrial matrix for ATP synthesis, and export of ATP out to fuel the cell. Cycles between the cytoplasmic-open state (c-state) and the matrix-open state (m-state): operates by the alternating access mechanism with a single substrate-binding site intermittently exposed to either the cytosolic (c-state) or matrix (m-state) side of the inner mitochondrial membrane. The polypeptide is ADP,ATP carrier protein, mitochondrial (Oryza sativa subsp. japonica (Rice)).